A 296-amino-acid chain; its full sequence is Chronophin (296 aa).

Catalysis depends on Asp25, which acts as the Nucleophile. Asp25 and Asn27 together coordinate Mg(2+). The active-site Proton donor is Asn27. Residues 58–60 (SNN), His182, and Lys213 each bind substrate. Position 238 (Asp238) interacts with Mg(2+).

Belongs to the HAD-like hydrolase superfamily. Homodimer. Requires Mg(2+) as cofactor. As to expression, detected in brain (at protein level).

It is found in the cytoplasm. It localises to the cytosol. The protein resides in the cytoskeleton. The protein localises to the cell projection. Its subcellular location is the ruffle membrane. It is found in the lamellipodium membrane. It localises to the cell membrane. It catalyses the reaction pyridoxal 5'-phosphate + H2O = pyridoxal + phosphate. The enzyme catalyses pyridoxine 5'-phosphate + H2O = pyridoxine + phosphate. It carries out the reaction pyridoxamine + phosphate = pyridoxamine 5'-phosphate + H2O. The catalysed reaction is O-phospho-L-seryl-[protein] + H2O = L-seryl-[protein] + phosphate. Functions as a pyridoxal phosphate (PLP) phosphatase, which also catalyzes the dephosphorylation of pyridoxine 5'-phosphate (PNP) and pyridoxamine 5'-phosphate (PMP), with order of substrate preference PLP &gt; PNP &gt; PMP and therefore plays a role in vitamin B6 metabolism. Also functions as a protein serine phosphatase that specifically dephosphorylates 'Ser-3' in proteins of the actin-depolymerizing factor (ADF)/cofilin family like CFL1 and DSTN. Thereby, regulates cofilin-dependent actin cytoskeleton reorganization, being required for normal progress through mitosis and normal cytokinesis. Does not dephosphorylate phosphothreonines in LIMK1. Does not dephosphorylate peptides containing phosphotyrosine. The protein is Chronophin of Bos taurus (Bovine).